The following is a 202-amino-acid chain: tRNA (guanine-N(7)-)-methyltransferase (202 aa).

Glu-34, Glu-59, Asp-86, and Asp-107 together coordinate S-adenosyl-L-methionine. Asp-107 is a catalytic residue. Residues Lys-111, Asp-143, and 181–184 contribute to the substrate site; that span reads TDYE.

Belongs to the class I-like SAM-binding methyltransferase superfamily. TrmB family.

It carries out the reaction guanosine(46) in tRNA + S-adenosyl-L-methionine = N(7)-methylguanosine(46) in tRNA + S-adenosyl-L-homocysteine. It functions in the pathway tRNA modification; N(7)-methylguanine-tRNA biosynthesis. Catalyzes the formation of N(7)-methylguanine at position 46 (m7G46) in tRNA. In Metamycoplasma hominis (strain ATCC 23114 / DSM 25592 / NBRC 14850 / NCTC 10111 / PG21) (Mycoplasma hominis), this protein is tRNA (guanine-N(7)-)-methyltransferase.